A 542-amino-acid polypeptide reads, in one-letter code: CTP synthase (542 aa).

An amidoligase domain region spans residues Met-1–Ile-265. Ser-13 contributes to the CTP binding site. Ser-13 serves as a coordination point for UTP. ATP is bound by residues Ser-14–Ile-19 and Asp-71. The Mg(2+) site is built by Asp-71 and Glu-139. CTP-binding positions include Asp-146–Glu-148, Lys-186–Gln-191, and Lys-222. Residues Lys-186–Gln-191 and Lys-222 each bind UTP. Residues Thr-291–Leu-541 form the Glutamine amidotransferase type-1 domain. Residue Gly-353 coordinates L-glutamine. The Nucleophile; for glutamine hydrolysis role is filled by Cys-380. L-glutamine is bound by residues Phe-381–Gln-384, Glu-404, and Arg-469. Catalysis depends on residues His-514 and Glu-516.

This sequence belongs to the CTP synthase family. Homotetramer.

It carries out the reaction UTP + L-glutamine + ATP + H2O = CTP + L-glutamate + ADP + phosphate + 2 H(+). The enzyme catalyses L-glutamine + H2O = L-glutamate + NH4(+). It catalyses the reaction UTP + NH4(+) + ATP = CTP + ADP + phosphate + 2 H(+). It functions in the pathway pyrimidine metabolism; CTP biosynthesis via de novo pathway; CTP from UDP: step 2/2. Its activity is regulated as follows. Allosterically activated by GTP, when glutamine is the substrate; GTP has no effect on the reaction when ammonia is the substrate. The allosteric effector GTP functions by stabilizing the protein conformation that binds the tetrahedral intermediate(s) formed during glutamine hydrolysis. Inhibited by the product CTP, via allosteric rather than competitive inhibition. Functionally, catalyzes the ATP-dependent amination of UTP to CTP with either L-glutamine or ammonia as the source of nitrogen. Regulates intracellular CTP levels through interactions with the four ribonucleotide triphosphates. The sequence is that of CTP synthase from Sinorhizobium medicae (strain WSM419) (Ensifer medicae).